Here is a 262-residue protein sequence, read N- to C-terminus: Phosphatidylserine decarboxylase proenzyme (262 aa).

Active-site charge relay system; for autoendoproteolytic cleavage activity residues include Asp86, His142, and Ser226. Ser226 functions as the Schiff-base intermediate with substrate; via pyruvic acid; for decarboxylase activity in the catalytic mechanism. Pyruvic acid (Ser); by autocatalysis is present on Ser226.

It belongs to the phosphatidylserine decarboxylase family. PSD-B subfamily. Prokaryotic type I sub-subfamily. As to quaternary structure, heterodimer of a large membrane-associated beta subunit and a small pyruvoyl-containing alpha subunit. Pyruvate serves as cofactor. Post-translationally, is synthesized initially as an inactive proenzyme. Formation of the active enzyme involves a self-maturation process in which the active site pyruvoyl group is generated from an internal serine residue via an autocatalytic post-translational modification. Two non-identical subunits are generated from the proenzyme in this reaction, and the pyruvate is formed at the N-terminus of the alpha chain, which is derived from the carboxyl end of the proenzyme. The autoendoproteolytic cleavage occurs by a canonical serine protease mechanism, in which the side chain hydroxyl group of the serine supplies its oxygen atom to form the C-terminus of the beta chain, while the remainder of the serine residue undergoes an oxidative deamination to produce ammonia and the pyruvoyl prosthetic group on the alpha chain. During this reaction, the Ser that is part of the protease active site of the proenzyme becomes the pyruvoyl prosthetic group, which constitutes an essential element of the active site of the mature decarboxylase.

The protein localises to the cell membrane. The catalysed reaction is a 1,2-diacyl-sn-glycero-3-phospho-L-serine + H(+) = a 1,2-diacyl-sn-glycero-3-phosphoethanolamine + CO2. The protein operates within phospholipid metabolism; phosphatidylethanolamine biosynthesis; phosphatidylethanolamine from CDP-diacylglycerol: step 2/2. Catalyzes the formation of phosphatidylethanolamine (PtdEtn) from phosphatidylserine (PtdSer). The polypeptide is Phosphatidylserine decarboxylase proenzyme (Bacillus cereus (strain B4264)).